The chain runs to 918 residues: Calcium-transporting ATPase type 2C member 1 (918 aa).

Over 1 to 78 the chain is Cytoplasmic; the sequence is MKVARFQKIP…EPLWKKYISQ (78 aa). The helical transmembrane segment at 79 to 95 threads the bilayer; it reads FKNPLIMLLLASAVISI. The Extracellular portion of the chain corresponds to 96–99; the sequence is LMRQ. Residues 100–121 form a helical membrane-spanning segment; it reads FDDAVSITVAIVIVVTVAFVQE. The Cytoplasmic portion of the chain corresponds to 122-262; the sequence is YRSEKSLEEL…PKTPLQKSMD (141 aa). A helical membrane pass occupies residues 263–282; the sequence is LLGKQLSFYSFGIIGIIMLV. Residues 283 to 294 lie on the Extracellular side of the membrane; that stretch reads GWLLGKDILEMF. Residues 295 to 316 traverse the membrane as a helical segment; that stretch reads TISVSLAVAAIPEGLPIVVTVT. Residues 317–699 lie on the Cytoplasmic side of the membrane; the sequence is LALGVMRMVK…EGKGIYNNIK (383 aa). Aspartate 349 functions as the 4-aspartylphosphate intermediate in the catalytic mechanism. Aspartate 643 and aspartate 647 together coordinate Mg(2+). The helical transmembrane segment at 700-722 threads the bilayer; the sequence is NFVRFQLSTSIAALTLISLATLM. Topologically, residues 723 to 727 are extracellular; the sequence is NFPNP. A helical transmembrane segment spans residues 728-751; it reads LNAMQILWINIIMDGPPAQSLGVE. Over 752–775 the chain is Cytoplasmic; that stretch reads PVDKDVIRKPPRNWKDSILTKNLI. A helical membrane pass occupies residues 776–794; sequence LKILVSSIIIVCGTLFVFW. Over 795 to 801 the chain is Extracellular; that stretch reads RELRDNV. The helical transmembrane segment at 802-827 threads the bilayer; it reads ITPRDTTMTFTCFVFFDMFNALSSRS. Residues 828-842 are Cytoplasmic-facing; that stretch reads QTKSVFEIGLCSNKM. The chain crosses the membrane as a helical span at residues 843–862; sequence FCYAVLGSIMGQLLVIYFPP. The Extracellular segment spans residues 863–875; it reads LQKVFQTESLSIL. The helical transmembrane segment at 876 to 892 threads the bilayer; sequence DLLFLLGLTSSVCIVSE. Topologically, residues 893–918 are cytoplasmic; the sequence is IIKKVERSREKVQKNAGSASSSFLEV.

The protein belongs to the cation transport ATPase (P-type) (TC 3.A.3) family. Type IIA subfamily. Monomer. Homodimer. In terms of tissue distribution, expressed in hippocampal neurons in the CA3 region of the Amon's horn (at protein level). Expressed in brain, heart, lung, stomach, liver, colon and mammary gland.

Its subcellular location is the golgi apparatus. The protein resides in the trans-Golgi network membrane. The protein localises to the golgi stack membrane. It carries out the reaction Ca(2+)(in) + ATP + H2O = Ca(2+)(out) + ADP + phosphate + H(+). It catalyses the reaction Mn(2+)(in) + ATP + H2O = Mn(2+)(out) + ADP + phosphate + H(+). Functionally, ATP-driven pump that supplies the Golgi apparatus with Ca(2+) and Mn(2+) ions, both essential cofactors for processing and trafficking of newly synthesized proteins in the secretory pathway. Within a catalytic cycle, acquires Ca(2+) or Mn(2+) ions on the cytoplasmic side of the membrane and delivers them to the lumenal side. The transfer of ions across the membrane is coupled to ATP hydrolysis and is associated with a transient phosphorylation that shifts the pump conformation from inward-facing to outward-facing state. Plays a primary role in the maintenance of Ca(2+) homeostasis in the trans-Golgi compartment with a functional impact on Golgi and post-Golgi protein sorting as well as a structural impact on cisternae morphology. Responsible for loading the Golgi stores with Ca(2+) ions in keratinocytes, contributing to keratinocyte differentiation and epidermis integrity. Participates in Ca(2+) and Mn(2+) ions uptake into the Golgi store of hippocampal neurons and regulates protein trafficking required for neural polarity. May also play a role in the maintenance of Ca(2+) and Mn(2+) homeostasis and signaling in the cytosol while preventing cytotoxicity. In Mus musculus (Mouse), this protein is Calcium-transporting ATPase type 2C member 1.